Here is a 161-residue protein sequence, read N- to C-terminus: Type II secretion system protein M (161 aa).

Over 1-16 the chain is Cytoplasmic; sequence MHNLLALWQQRTRRER. Residues 17–36 traverse the membrane as a helical segment; the sequence is CLLLGMAVVLLIGLVYYTLW. Topologically, residues 37-161 are periplasmic; the sequence is QPWQNREAQW…TLVLERSDEK (125 aa).

It belongs to the GSP M family. In terms of assembly, type II secretion system is composed of four main components: the outer membrane complex, the inner membrane complex, the cytoplasmic secretion ATPase and the periplasm-spanning pseudopilus. Forms homodimers. Interacts with PulL/GspL. Interacts with PulE/GspE and PulF/GspF.

It is found in the cell inner membrane. In terms of biological role, inner membrane component of the type II secretion system required for the energy-dependent secretion of extracellular factors such as proteases and toxins from the periplasm. Plays a role in the complex assembly and recruits PulL resulting in a stable complex in the inner membrane. Provides thus a link between the energy-providing PulE protein in the cytoplasm and the rest of the T2SS machinery. The polypeptide is Type II secretion system protein M (pulM) (Klebsiella pneumoniae).